A 477-amino-acid polypeptide reads, in one-letter code: Putative multidrug resistance protein MdtD (477 aa).

14 consecutive transmembrane segments (helical) span residues 13–33 (LWIVAFGFFMQTLDTTIVNTA), 50–70 (SVIVSYVLTVAVMLPASGWLA), 73–93 (VGVQRVFFSAIVLFTLGSILC), 107–127 (VVQGIGGAMMVPVGRLTVMKI), 139–159 (FVTLPGQIGPLMGPALGGFLV), 166–186 (WIFLINIPVGIAGAIATLLLM), 196–216 (FDISGFILLAVGMATLTLALD), 220–240 (GMGLSATAIAGLVVAGVAALA), 268–288 (LTASLLGRIGSGMLPFMTPLF), 291–311 (VGMGFSPFHAGLMMIPMIIGS), 326–348 (GYRNVLVAATLMLALISLSFPLV), 352–374 (GWIWLLPVVLFFQGMVNSLRFSA), 394–414 (LLSMVMQLSMSLGVSIAGILI), and 432–452 (AFIYSYCCMALIIALPALAFA).

It belongs to the major facilitator superfamily. TCR/Tet family.

The protein resides in the cell inner membrane. In Serratia proteamaculans (strain 568), this protein is Putative multidrug resistance protein MdtD.